The chain runs to 33 residues: MEQVADFDTIYQAMIQISVVLCFALGIIAGGQR.

A helical membrane pass occupies residues 10 to 30 (IYQAMIQISVVLCFALGIIAG).

The protein belongs to the inovirus G7P protein family.

It is found in the virion. It localises to the host membrane. May initiate with G9P the virion concomitant assembly-budding process, by interacting with the packaging signal of the viral genome. The assembly-budding takes place at the host inner membrane. In turn, G7P and G9P are present at the end of the filamentous virion that emerges first from the bacterial host. This is Tail virion protein G7P (VII) from Escherichia coli (Bacteriophage f1).